A 241-amino-acid chain; its full sequence is Platelet-derived growth factor subunit B (241 aa).

The signal sequence occupies residues 1 to 20 (MNRCWALFLSLCCYLRLVSA). A propeptide spans 21–81 (EGDPIPEELY…ELESLARGRR (61 aa)) (removed in mature form). Asparagine 63 carries an N-linked (GlcNAc...) asparagine glycan. Intrachain disulfides connect cysteine 97-cysteine 141, cysteine 130-cysteine 178, and cysteine 134-cysteine 180. A propeptide spans 191–241 (RSPGGSQEQRAKTPQTRVTIRTVRVRRPPKGKHRKFKHTHDKTALKETLGA) (removed in mature form). Residues 216–230 (RRPPKGKHRKFKHTH) show a composition bias toward basic residues. Positions 216–241 (RRPPKGKHRKFKHTHDKTALKETLGA) are disordered.

Belongs to the PDGF/VEGF growth factor family. In terms of assembly, antiparallel homodimer; disulfide-linked. Antiparallel heterodimer with PDGFA; disulfide-linked. The PDGFB homodimer interacts with PDGFRA and PDGFRB homodimers, and with heterodimers formed by PDGFRA and PDGFRB. The heterodimer composed of PDGFA and PDGFB interacts with PDGFRB homodimers, and with heterodimers formed by PDGFRA and PDGFRB. Interacts with XLKD1. Interacts with LRP1. Interacts with SORL1 (via the N-terminal ectodomain). Interacts with CD82; this interaction inhibits PDGFB-mediated signaling pathway. As to expression, expressed at high levels in the heart, brain (sustantia nigra), placenta and fetal kidney. Expressed at moderate levels in the brain (hippocampus), skeletal muscle, kidney and lung.

It is found in the secreted. In terms of biological role, growth factor that plays an essential role in the regulation of embryonic development, cell proliferation, cell migration, survival and chemotaxis. Potent mitogen for cells of mesenchymal origin. Required for normal proliferation and recruitment of pericytes and vascular smooth muscle cells in the central nervous system, skin, lung, heart and placenta. Required for normal blood vessel development, and for normal development of kidney glomeruli. Plays an important role in wound healing. Signaling is modulated by the formation of heterodimers with PDGFA. The chain is Platelet-derived growth factor subunit B (PDGFB) from Homo sapiens (Human).